The chain runs to 56 residues: Prokaryotic ubiquitin-like protein UBact (56 aa).

The interval 1-56 (MPDQAQKTRPVGPGPSGGGEGPGSPKVEKPNTEELLKRMRKVDPDQAKRYRQRTGQ) is disordered. The span at 26–48 (KVEKPNTEELLKRMRKVDPDQAK) shows a compositional bias: basic and acidic residues. Q56 is subject to Deamidated glutamine. Q56 is covalently cross-linked (Isoglutamyl lysine isopeptide (Gln-Lys) (interchain with K-? in acceptor proteins)).

The protein belongs to the ubiquitin-like protein UBact family. Post-translationally, may be modified by deamidation of its C-terminal glutamine to glutamate by the adjacently encoded deamidase. This could be a prerequisite to the subsequent conjugation, as shown in the other prokaryotic ubiquitin-like protein Pup.

May function as a protein modifier covalently attached to lysine residues of substrate proteins. This may serve to target the modified proteins for degradation by proteasomes. This is Prokaryotic ubiquitin-like protein UBact from Pedosphaera parvula (strain Ellin514).